Reading from the N-terminus, the 97-residue chain is Class II hydrophobin 1 (97 aa).

Positions 1–16 (MKFFAIAALFAAAAVA) are cleaved as a signal peptide. A propeptide spanning residues 17 to 22 (QPLEDR) is cleaved from the precursor. 4 cysteine pairs are disulfide-bonded: Cys-30–Cys-79, Cys-40–Cys-70, Cys-41–Cys-53, and Cys-80–Cys-91.

Belongs to the cerato-ulmin hydrophobin family. As to quaternary structure, homotetramer. Further self-assembles to form highly ordered films at water-air interfaces through intermolecular interactions.

The protein localises to the secreted. Its subcellular location is the cell wall. Functionally, aerial growth, conidiation, and dispersal of filamentous fungi in the environment rely upon a capability of their secreting small amphipathic proteins called hydrophobins (HPBs) with low sequence identity. Class I can self-assemble into an outermost layer of rodlet bundles on aerial cell surfaces, conferring cellular hydrophobicity that supports fungal growth, development and dispersal; whereas Class II form highly ordered films at water-air interfaces through intermolecular interactions but contribute nothing to the rodlet structure. Hbf1 is a class II hydrophobin that has a role in hyphal development and is in particular required for the formation of aerial hyphae. In Hypocrea jecorina (Trichoderma reesei), this protein is Class II hydrophobin 1.